We begin with the raw amino-acid sequence, 216 residues long: 3-isopropylmalate dehydratase small subunit (216 aa).

It belongs to the LeuD family. LeuD type 1 subfamily. As to quaternary structure, heterodimer of LeuC and LeuD.

The enzyme catalyses (2R,3S)-3-isopropylmalate = (2S)-2-isopropylmalate. It participates in amino-acid biosynthesis; L-leucine biosynthesis; L-leucine from 3-methyl-2-oxobutanoate: step 2/4. In terms of biological role, catalyzes the isomerization between 2-isopropylmalate and 3-isopropylmalate, via the formation of 2-isopropylmaleate. The sequence is that of 3-isopropylmalate dehydratase small subunit from Psychrobacter arcticus (strain DSM 17307 / VKM B-2377 / 273-4).